The following is a 311-amino-acid chain: Malate dehydrogenase (311 aa).

NAD(+)-binding positions include 7-13 (GAAGGIG) and D34. Substrate-binding residues include R81 and R87. NAD(+) is bound by residues N94 and 117-119 (ITN). Positions 119 and 153 each coordinate substrate. The active-site Proton acceptor is H177. Residue M227 coordinates NAD(+).

Belongs to the LDH/MDH superfamily. MDH type 1 family. Homodimer.

It carries out the reaction (S)-malate + NAD(+) = oxaloacetate + NADH + H(+). Catalyzes the reversible oxidation of malate to oxaloacetate. This Haemophilus influenzae (strain 86-028NP) protein is Malate dehydrogenase.